The chain runs to 110 residues: DDFRNEFDRLLIHMTEEQFAKLEQALAHLSHQVTELEKSKSKELKAQILREISIGLDFIDSAKGHFERELKRADLNLAEKFNFESALSTGAVLHKDLTALATKVKAIETK.

The protein belongs to the mite group 5 allergen family.

The protein is Mite allergen Lep d 5 of Lepidoglyphus destructor (Storage mite).